We begin with the raw amino-acid sequence, 71 residues long: Putative antitoxin VapB14 (71 aa).

Functionally, putative antitoxin component of a possible type II toxin-antitoxin (TA) system. The cognate toxin is VapB14. In Mycobacterium tuberculosis (strain ATCC 25618 / H37Rv), this protein is Putative antitoxin VapB14 (vapB14).